The primary structure comprises 322 residues: Putative membrane-bound redox modulator Alx (322 aa).

Topologically, residues 1–6 (MNTVGT) are periplasmic. Residues 7–27 (PLLWGGFAVVVVIMLSIDLLL) traverse the membrane as a helical segment. Topologically, residues 28–43 (QGRRGAHAMSMKQAAG) are cytoplasmic. Residues 44–64 (WSILWVTLSLLFNAAFWWYLA) traverse the membrane as a helical segment. Residues 65–89 (ETQGREVADPQALAFLTGYLIEKSL) lie on the Periplasmic side of the membrane. Residues 90–110 (AVDNVFVWLMLFSYFSVPPAL) form a helical membrane-spanning segment. The Cytoplasmic segment spans residues 111 to 113 (QRR). Residues 114–134 (VLVYGVLGAIVLRTIMIFAGT) form a helical membrane-spanning segment. A topological domain (periplasmic) is located at residue Trp-135. The chain crosses the membrane as a helical span at residues 136–156 (LITQFEWLLYVFGAFLLFTGV). Topologically, residues 157-198 (KMALAKEDESGIGEKPMVRWLRGHLRMTDTIENEHFFVRKNG) are cytoplasmic. A helical transmembrane segment spans residues 199–219 (LLYATPLLLVLIMVEFSDVIF). The Periplasmic portion of the chain corresponds to 220-225 (AVDSIP). A helical transmembrane segment spans residues 226-246 (AIFAVTTDPFIVLTSNLFAIL). The Cytoplasmic portion of the chain corresponds to 247–261 (GLRAMYFLLSGVAER). The chain crosses the membrane as a helical span at residues 262 to 282 (FSMLKYGLAVILVFIGIKMLI). Topologically, residues 283 to 286 (VDFY) are periplasmic. A helical transmembrane segment spans residues 287-307 (HIPIAISLGVVFGILTITLVI). The Cytoplasmic segment spans residues 308 to 321 (NTWVNHQRDKKLRA).

This sequence belongs to the TerC family.

It is found in the cell inner membrane. Has been proposed to be a redox modulator. The chain is Putative membrane-bound redox modulator Alx (alx) from Salmonella typhi.